We begin with the raw amino-acid sequence, 388 residues long: Leucine aminopeptidase 1 (388 aa).

An N-terminal signal peptide occupies residues 1–19; sequence MRVLAAIALGATGLRGALA. A propeptide spanning residues 20–88 is cleaved from the precursor; the sequence is AVVPQEVLGT…YPTLNSASYV (69 aa). N-linked (GlcNAc...) asparagine glycans are attached at residues Asn106 and Asn180. Zn(2+) is bound by residues His188 and Asp207. Asn232 is a glycosylation site (N-linked (GlcNAc...) asparagine). Residues Glu246 and Asp273 each coordinate Zn(2+). An intrachain disulfide couples Cys322 to Cys326. A Zn(2+)-binding site is contributed by His355.

The protein belongs to the peptidase M28 family. M28E subfamily. In terms of assembly, monomer. Zn(2+) serves as cofactor.

The protein localises to the secreted. Its function is as follows. Extracellular aminopeptidase that allows assimilation of proteinaceous substrates. In Aspergillus clavatus (strain ATCC 1007 / CBS 513.65 / DSM 816 / NCTC 3887 / NRRL 1 / QM 1276 / 107), this protein is Leucine aminopeptidase 1 (lap1).